A 295-amino-acid polypeptide reads, in one-letter code: MSANEIPDELWRKILEIGVKSSTFSYKDLCCISISSRRLFRLSCDDSLWDLLLVHDFPNHIVSASSSSESPTKFIYMTRFEREKERKLAAHRRALLRKESEISEWGRRIRELEARLSDEAERLQSSSLQFSDLLKVRQASVALNVWQPEVVRGRQKQMVEQNAVPVEGRLRALEMEMKLCKQQIMGLNRALREVKHRYDIAIKELESMKYHPLRDYKSIRNGDQGSNGKTKKLKTSINYSGDQVSNGKRRKLKTSIDCKFMNISHFSSCSSVTEKFYSYSPKIIHEYIPENLLVL.

In terms of domain architecture, F-box; degenerate spans 19–66 (VKSSTFSYKDLCCISISSRRLFRLSCDDSLWDLLLVHDFPNHIVSASS). 2 coiled-coil regions span residues 82-129 (REKE…SSLQ) and 167-209 (EGRL…ESMK). The segment at 217–245 (KSIRNGDQGSNGKTKKLKTSINYSGDQVS) is disordered. Positions 235–245 (TSINYSGDQVS) are enriched in polar residues.

As to quaternary structure, part of a SCF (ASK-cullin-F-box) protein ligase complex. Interacts with SKP1A/ASK1 and SPK1B/ASK2.

It participates in protein modification; protein ubiquitination. Its function is as follows. Component of SCF(ASK-cullin-F-box) E3 ubiquitin ligase complexes, which may mediate the ubiquitination and subsequent proteasomal degradation of target proteins. The chain is F-box protein SKIP24 (SKIP24) from Arabidopsis thaliana (Mouse-ear cress).